A 56-amino-acid polypeptide reads, in one-letter code: UPF0434 protein Ecaj_0131 (56 aa).

Belongs to the UPF0434 family.

The sequence is that of UPF0434 protein Ecaj_0131 from Ehrlichia canis (strain Jake).